The primary structure comprises 403 residues: Casein kinase I isoform delta-A (403 aa).

The 269-residue stretch at 9 to 277 folds into the Protein kinase domain; it reads YRLGRKIGSG…YLRQLFRNLF (269 aa). ATP contacts are provided by residues 15-23 and lysine 38; that span reads IGSGSFGDI. The active-site Proton acceptor is the aspartate 128. The segment at 315–340 is autoinhibitory; sequence QGRIPLPRVMLPTSSGRPRGTQEVAP. The interval 322 to 403 is disordered; that stretch reads RVMLPTSSGR…PSGLQSAVPR (82 aa).

This sequence belongs to the protein kinase superfamily. As to quaternary structure, monomer. Interacts with per1 and per2. Component of the circadian core oscillator. In terms of processing, autophosphorylated on serine and threonine residues.

It is found in the cytoplasm. Its subcellular location is the nucleus. The enzyme catalyses L-seryl-[protein] + ATP = O-phospho-L-seryl-[protein] + ADP + H(+). It catalyses the reaction L-threonyl-[protein] + ATP = O-phospho-L-threonyl-[protein] + ADP + H(+). Exhibits substrate-dependent heparin activation. Its function is as follows. Casein kinases are operationally defined by their preferential utilization of acidic proteins such as caseins as substrates. Central component of the circadian clock. May act as a negative regulator of circadian rhythmicity by phosphorylating per1 and per2, which may lead to their degradation. Participates in wnt signaling. This Danio rerio (Zebrafish) protein is Casein kinase I isoform delta-A (csnk1da).